The primary structure comprises 90 residues: Nodulation protein F (90 aa).

The region spanning 4 to 89 (QLESEIIGII…RHSGSHPRLA (86 aa)) is the Carrier domain. O-(pantetheine 4'-phosphoryl)serine is present on serine 46. The disordered stretch occupies residues 65–90 (RDEHGRGVVGSPERRRHSGSHPRLAH). Positions 78–90 (RRRHSGSHPRLAH) are enriched in basic residues.

Post-translationally, 4'-phosphopantetheine is transferred from CoA to a specific serine of apo-NodF.

Proposed to synthesize nod factor fatty acyl chain. Involved in trans-2,trans-4,trans-6,cis-11-octadecatetraenoic acid biosynthesis. The sequence is that of Nodulation protein F (nodF) from Rhizobium meliloti (Ensifer meliloti).